Reading from the N-terminus, the 309-residue chain is Homoserine kinase (309 aa).

ATP is bound at residue 91 to 101; it reads PIGSGLGSSAC.

It belongs to the GHMP kinase family. Homoserine kinase subfamily.

It localises to the cytoplasm. It carries out the reaction L-homoserine + ATP = O-phospho-L-homoserine + ADP + H(+). Its pathway is amino-acid biosynthesis; L-threonine biosynthesis; L-threonine from L-aspartate: step 4/5. Functionally, catalyzes the ATP-dependent phosphorylation of L-homoserine to L-homoserine phosphate. The polypeptide is Homoserine kinase (Klebsiella pneumoniae subsp. pneumoniae (strain ATCC 700721 / MGH 78578)).